We begin with the raw amino-acid sequence, 247 residues long: Large ribosomal subunit protein uL30 (247 aa).

Position 1 is an N-acetylmethionine (Met-1). Tandem repeats lie at residues 7-17 (KKKVPAVPETL), 18-29 (KKKRRNFAELKI), 30-41 (KRLRKKFAQKML), and 42-53 (RKARRKLIYEKA). The 4 X 12 AA tandem repeats stretch occupies residues 7–53 (KKKVPAVPETLKKKRRNFAELKIKRLRKKFAQKMLRKARRKLIYEKA). Thr-16 bears the Phosphothreonine mark. The residue at position 123 (Lys-123) is an N6-acetyllysine. Lys-126 is modified (N6-succinyllysine). Tyr-138 bears the Phosphotyrosine mark.

This sequence belongs to the universal ribosomal protein uL30 family. As to quaternary structure, component of the large ribosomal subunit. Homodimer. Interacts with DHX33.

It localises to the cytoplasm. Component of the large ribosomal subunit. The ribosome is a large ribonucleoprotein complex responsible for the synthesis of proteins in the cell. Binds to G-rich structures in 28S rRNA and in mRNAs. Plays a regulatory role in the translation apparatus; inhibits cell-free translation of mRNAs. This Pongo abelii (Sumatran orangutan) protein is Large ribosomal subunit protein uL30 (RPL7).